A 262-amino-acid polypeptide reads, in one-letter code: Transcription factor Adf-1 (262 aa).

Residues 24 to 104 (NLIEAVKLNP…QMQFLVDSIR (81 aa)) constitute a DNA-binding region (MADF). Positions 217 to 256 (SAEDQSFGMVVTDMLNTLGVRQKAEAKVHIIKYLTDMQLL) constitute a BESS domain.

Post-translationally, O-glycosylated; contains N-acetylglucosamine side chains.

The protein resides in the nucleus. Functionally, may play an important role not only in the regulation of Adh expression but also in the transcription of other genes. In Drosophila melanogaster (Fruit fly), this protein is Transcription factor Adf-1 (Adf1).